Reading from the N-terminus, the 630-residue chain is Chaperone protein HtpG (630 aa).

Residues 1–343 form an a; substrate-binding region; that stretch reads MAKHQFQTEA…SKDLPLNVSR (343 aa). A b region spans residues 344 to 554; the sequence is EILQSNAVMA…KEDPAFMMAQ (211 aa). The c stretch occupies residues 555–630; that stretch reads IMKQMGQSGD…RLNRVIAKAI (76 aa).

This sequence belongs to the heat shock protein 90 family. Homodimer.

Its subcellular location is the cytoplasm. Molecular chaperone. Has ATPase activity. This chain is Chaperone protein HtpG, found in Sulfurimonas denitrificans (strain ATCC 33889 / DSM 1251) (Thiomicrospira denitrificans (strain ATCC 33889 / DSM 1251)).